A 145-amino-acid polypeptide reads, in one-letter code: RNA polymerase-binding transcription factor DksA (145 aa).

Zn(2+) contacts are provided by C108, C111, C129, and C132. A dksA C4-type zinc finger spans residues 108-132 (CDCCGEEIGIRRLEARPTADLCIDC).

It belongs to the DksA family. In terms of assembly, interacts directly with the RNA polymerase.

The protein resides in the cytoplasm. Functionally, transcription factor that acts by binding directly to the RNA polymerase (RNAP). Required for negative regulation of rRNA expression and positive regulation of several amino acid biosynthesis promoters. Also required for regulation of fis expression. The polypeptide is RNA polymerase-binding transcription factor DksA (Haemophilus influenzae (strain ATCC 51907 / DSM 11121 / KW20 / Rd)).